The sequence spans 259 residues: Exotoxin A regulatory protein (259 aa).

It localises to the cell inner membrane. Positive regulation of toxA gene transcription. The protein is Exotoxin A regulatory protein (toxR) of Pseudomonas aeruginosa (strain ATCC 15692 / DSM 22644 / CIP 104116 / JCM 14847 / LMG 12228 / 1C / PRS 101 / PAO1).